A 101-amino-acid chain; its full sequence is Protein Tat (101 aa).

A disordered region spans residues 1-20 (MEPVDPNLEPWKHPGSQPTT). Residues 1–24 (MEPVDPNLEPWKHPGSQPTTACSN) are interaction with human CREBBP. The transactivation stretch occupies residues 1–48 (MEPVDPNLEPWKHPGSQPTTACSNCYCKVCCWHCQLCFLKKGLGISYG). The Zn(2+) site is built by C22, C25, and C27. The segment at 22-37 (CSNCYCKVCCWHCQLC) is cysteine-rich. Position 28 is an N6-acetyllysine; by host PCAF (K28). Zn(2+) is bound by residues C30, H33, C34, and C37. Residues 38–48 (FLKKGLGISYG) form a core region. The tract at residues 48–101 (GKKKRKPRRGPPQGSKDHQTLIPKQPLPQSQRVSAGQEESKKKVESKAKTDRFA) is disordered. The Nuclear localization signal, RNA-binding (TAR), and protein transduction signature appears at 49–57 (KKKRKPRRG). The segment at 49 to 86 (KKKRKPRRGPPQGSKDHQTLIPKQPLPQSQRVSAGQEE) is interaction with the host capping enzyme RNGTT. N6-acetyllysine; by host EP300 and GCN5L2 occurs at positions 50 and 51. An Asymmetric dimethylarginine; by host PRMT6 modification is found at R52. Residue K71 forms a Glycyl lysine isopeptide (Lys-Gly) (interchain with G-Cter in ubiquitin) linkage. The segment covering 85–101 (EESKKKVESKAKTDRFA) has biased composition (basic and acidic residues).

It belongs to the lentiviruses Tat family. In terms of assembly, interacts with host CCNT1. Associates with the P-TEFb complex composed at least of Tat, P-TEFb (CDK9 and CCNT1), TAR RNA, RNA Pol II. Recruits the HATs CREBBP, TAF1/TFIID, EP300, PCAF and GCN5L2. Interacts with host KAT5/Tip60; this interaction targets the latter to degradation. Interacts with the host deacetylase SIRT1. Interacts with host capping enzyme RNGTT; this interaction stimulates RNGTT. Binds to host KDR, and to the host integrins ITGAV/ITGB3 and ITGA5/ITGB1. Interacts with host KPNB1/importin beta-1 without previous binding to KPNA1/importin alpha-1. Interacts with EIF2AK2. Interacts with host nucleosome assembly protein NAP1L1; this interaction may be required for the transport of Tat within the nucleus, since the two proteins interact at the nuclear rim. Interacts with host C1QBP/SF2P32; this interaction involves lysine-acetylated Tat. Interacts with the host chemokine receptors CCR2, CCR3 and CXCR4. Interacts with host DPP4/CD26; this interaction may trigger an anti-proliferative effect. Interacts with host LDLR. Interacts with the host extracellular matrix metalloproteinase MMP1. Interacts with host PRMT6; this interaction mediates Tat's methylation. Interacts with, and is ubiquitinated by MDM2/Hdm2. Interacts with host PSMC3 and HTATIP2. Interacts with STAB1; this interaction may overcome SATB1-mediated repression of IL2 and IL2RA (interleukin) in T cells by binding to the same domain than HDAC1. Interacts (when acetylated) with human CDK13, thereby increasing HIV-1 mRNA splicing and promoting the production of the doubly spliced HIV-1 protein Nef. Interacts with host TBP; this interaction modulates the activity of transcriptional pre-initiation complex. Interacts with host RELA. Interacts with host PLSCR1; this interaction negatively regulates Tat transactivation activity by altering its subcellular distribution. In terms of processing, asymmetrical arginine methylation by host PRMT6 seems to diminish the transactivation capacity of Tat and affects the interaction with host CCNT1. Post-translationally, acetylation by EP300, CREBBP, GCN5L2/GCN5 and PCAF regulates the transactivation activity of Tat. EP300-mediated acetylation of Lys-50 promotes dissociation of Tat from the TAR RNA through the competitive binding to PCAF's bromodomain. In addition, the non-acetylated Tat's N-terminus can also interact with PCAF. PCAF-mediated acetylation of Lys-28 enhances Tat's binding to CCNT1. Lys-50 is deacetylated by SIRT1. Polyubiquitination by host MDM2 does not target Tat to degradation, but activates its transactivation function and fosters interaction with CCNT1 and TAR RNA. In terms of processing, phosphorylated by EIF2AK2 on serine and threonine residues adjacent to the basic region important for TAR RNA binding and function. Phosphorylation of Tat by EIF2AK2 is dependent on the prior activation of EIF2AK2 by dsRNA.

It localises to the host nucleus. It is found in the host nucleolus. The protein resides in the host cytoplasm. Its subcellular location is the secreted. Functionally, transcriptional activator that increases RNA Pol II processivity, thereby increasing the level of full-length viral transcripts. Recognizes a hairpin structure at the 5'-LTR of the nascent viral mRNAs referred to as the transactivation responsive RNA element (TAR) and recruits the cyclin T1-CDK9 complex (P-TEFb complex) that will in turn hyperphosphorylate the RNA polymerase II to allow efficient elongation. The CDK9 component of P-TEFb and other Tat-activated kinases hyperphosphorylate the C-terminus of RNA Pol II that becomes stabilized and much more processive. Other factors such as HTATSF1/Tat-SF1, SUPT5H/SPT5, and HTATIP2 are also important for Tat's function. Besides its effect on RNA Pol II processivity, Tat induces chromatin remodeling of proviral genes by recruiting the histone acetyltransferases (HATs) CREBBP, EP300 and PCAF to the chromatin. This also contributes to the increase in proviral transcription rate, especially when the provirus integrates in transcriptionally silent region of the host genome. To ensure maximal activation of the LTR, Tat mediates nuclear translocation of NF-kappa-B by interacting with host RELA. Through its interaction with host TBP, Tat may also modulate transcription initiation. Tat can reactivate a latently infected cell by penetrating in it and transactivating its LTR promoter. In the cytoplasm, Tat is thought to act as a translational activator of HIV-1 mRNAs. In terms of biological role, extracellular circulating Tat can be endocytosed by surrounding uninfected cells via the binding to several surface receptors such as CD26, CXCR4, heparan sulfate proteoglycans (HSPG) or LDLR. Neurons are rarely infected, but they internalize Tat via their LDLR. Through its interaction with nuclear HATs, Tat is potentially able to control the acetylation-dependent cellular gene expression. Modulates the expression of many cellular genes involved in cell survival, proliferation or in coding for cytokines or cytokine receptors. Tat plays a role in T-cell and neurons apoptosis. Tat induced neurotoxicity and apoptosis probably contribute to neuroAIDS. Circulating Tat also acts as a chemokine-like and/or growth factor-like molecule that binds to specific receptors on the surface of the cells, affecting many cellular pathways. In the vascular system, Tat binds to ITGAV/ITGB3 and ITGA5/ITGB1 integrins dimers at the surface of endothelial cells and competes with bFGF for heparin-binding sites, leading to an excess of soluble bFGF. The protein is Protein Tat of Human immunodeficiency virus type 1 group M subtype A (isolate U455) (HIV-1).